The sequence spans 214 residues: Elongation factor Ts (214 aa).

The involved in Mg(2+) ion dislocation from EF-Tu stretch occupies residues 80-83; it reads TDFV.

The protein belongs to the EF-Ts family.

The protein resides in the cytoplasm. In terms of biological role, associates with the EF-Tu.GDP complex and induces the exchange of GDP to GTP. It remains bound to the aminoacyl-tRNA.EF-Tu.GTP complex up to the GTP hydrolysis stage on the ribosome. This Syntrophomonas wolfei subsp. wolfei (strain DSM 2245B / Goettingen) protein is Elongation factor Ts.